Here is a 199-residue protein sequence, read N- to C-terminus: Recombination protein RecR (199 aa).

The C4-type zinc finger occupies 57–72 (CSICGNITEDDPCVIC). Residues 80 to 176 (STVLVVEEAK…KVTRLAHGLS (97 aa)) enclose the Toprim domain.

This sequence belongs to the RecR family.

Functionally, may play a role in DNA repair. It seems to be involved in an RecBC-independent recombinational process of DNA repair. It may act with RecF and RecO. The chain is Recombination protein RecR from Lactiplantibacillus plantarum (strain ATCC BAA-793 / NCIMB 8826 / WCFS1) (Lactobacillus plantarum).